The chain runs to 255 residues: MTIDLNCDLGESFGVWSMGNDAAMIDLATSVNIACGFHAGDADTMKKTVDLAKARGVSIGAHPGYRDLHGFGRRPVVGLSSSELENLVAYQIGALQAIATMAGHKVTHVKAHGALSNIACDDDMTARAIASAIKAVDPDLVFVVLANSRLVAAGEALGLSMVHEVFADRAYEDDGSLVSRRKPGAVLHDADAIAQRVVKMIQSGEVVSITGKTIKMRMDTVCIHGDTPGAVEIARALRKALKDNGIAVAPFKTAK.

The protein belongs to the LamB/PxpA family. In terms of assembly, forms a complex composed of PxpA, PxpB and PxpC.

It carries out the reaction 5-oxo-L-proline + ATP + 2 H2O = L-glutamate + ADP + phosphate + H(+). Its function is as follows. Catalyzes the cleavage of 5-oxoproline to form L-glutamate coupled to the hydrolysis of ATP to ADP and inorganic phosphate. This chain is 5-oxoprolinase subunit A, found in Nitrobacter hamburgensis (strain DSM 10229 / NCIMB 13809 / X14).